A 450-amino-acid polypeptide reads, in one-letter code: ATP-dependent protease ATPase subunit HslU (450 aa).

ATP-binding positions include V29, 71 to 76 (GVGKTE), D261, E328, and R400.

This sequence belongs to the ClpX chaperone family. HslU subfamily. As to quaternary structure, a double ring-shaped homohexamer of HslV is capped on each side by a ring-shaped HslU homohexamer. The assembly of the HslU/HslV complex is dependent on binding of ATP.

It is found in the cytoplasm. Functionally, ATPase subunit of a proteasome-like degradation complex; this subunit has chaperone activity. The binding of ATP and its subsequent hydrolysis by HslU are essential for unfolding of protein substrates subsequently hydrolyzed by HslV. HslU recognizes the N-terminal part of its protein substrates and unfolds these before they are guided to HslV for hydrolysis. The protein is ATP-dependent protease ATPase subunit HslU of Rickettsia africae (strain ESF-5).